The chain runs to 160 residues: Suppressyn (160 aa).

Positions 1–39 are cleaved as a signal peptide; sequence MACIYPTTFYTSLPTKSLNMGISLTTILILSVAVLLSTA. Positions 137–160 are disordered; it reads AKASKPTTPPENRPRHFHSFIQKL.

As to quaternary structure, interacts (secreted) with SLC1A5; mainly at cell surface. In terms of tissue distribution, specifically expressed in placenta by extravillous trophoblasts and syncytiotrophoblasts (at protein level).

Its subcellular location is the secreted. May play a role in trophoblasts syncytialization, the spontaneous fusion of their plasma membranes, an essential process in placental development. May negatively regulate cell-cell fusion by interacting with SLC1A5, the probable receptor on the cell surface of the fusogenic syncytin-1/ERVW-1. The chain is Suppressyn (ERVH48-1) from Homo sapiens (Human).